The sequence spans 384 residues: 8-amino-7-oxononanoate synthase (384 aa).

Substrate is bound at residue R21. Pyridoxal 5'-phosphate is bound at residue 108 to 109; sequence GF. A substrate-binding site is contributed by H133. Pyridoxal 5'-phosphate-binding residues include S179, H207, and T233. K236 bears the N6-(pyridoxal phosphate)lysine mark. Residue T352 coordinates substrate.

This sequence belongs to the class-II pyridoxal-phosphate-dependent aminotransferase family. BioF subfamily. Homodimer. Pyridoxal 5'-phosphate serves as cofactor.

It carries out the reaction 6-carboxyhexanoyl-[ACP] + L-alanine + H(+) = (8S)-8-amino-7-oxononanoate + holo-[ACP] + CO2. The protein operates within cofactor biosynthesis; biotin biosynthesis. Its function is as follows. Catalyzes the decarboxylative condensation of pimeloyl-[acyl-carrier protein] and L-alanine to produce 8-amino-7-oxononanoate (AON), [acyl-carrier protein], and carbon dioxide. The protein is 8-amino-7-oxononanoate synthase of Shigella flexneri serotype 5b (strain 8401).